Here is a 90-residue protein sequence, read N- to C-terminus: 10 kDa anti-sigma factor (90 aa).

As to quaternary structure, interacts with the host sigma factor RpoD, and thereby inhibits its interaction with the catalytic core of the host RNA polymerase.

Its function is as follows. Transcriptional inhibitor. Inhibits sigma 70-directed transcription by weakening its interaction with the core of the host's RNA polymerase. This allows Gp55 to successfully compete for the core enzyme. Plays an important role during the prereplicative period of phage T4 development. This is 10 kDa anti-sigma factor (asiA) from Enterobacteria phage T4 (Bacteriophage T4).